The sequence spans 349 residues: Short-wave-sensitive opsin 1 (349 aa).

Over 1 to 34 (MSKMSEEEEFLLFKNISLVGPWDGPQYHLAPVWA) the chain is Extracellular. Asparagine 15 is a glycosylation site (N-linked (GlcNAc...) asparagine). A helical transmembrane segment spans residues 35-59 (FHLQAVFMGFVFFVGTPLNATVLVA). At 60-71 (TLRYRKLRQPLN) the chain is on the cytoplasmic side. Residues 72–97 (YILVNVSLGGFIYCIFSVFIVFITSC) form a helical membrane-spanning segment. Topologically, residues 98 to 111 (YGYFVFGRHVCALE) are extracellular. Residues cysteine 108 and cysteine 185 are joined by a disulfide bond. A helical transmembrane segment spans residues 112–131 (AFLGCTAGLVTGWSLAFLAF). Residues 132 to 150 (ERYIIICKPFGNFRFSSKH) are Cytoplasmic-facing. A helical membrane pass occupies residues 151 to 174 (ALMVVVATWTIGIGVSIPPFFGWS). The Extracellular segment spans residues 175 to 200 (RFVPEGLQCSCGPDWYTVGTKYYSEY). A helical membrane pass occupies residues 201–228 (YTWFLFIFCYIVPLSLICFSYSQLLGAL). The Cytoplasmic segment spans residues 229–250 (RAVAAQQQESASTQKAEREVSH). Residues 251–274 (MVVVMVGSFCLCYTPYAALAMYIV) form a helical membrane-spanning segment. Residues 275-282 (NNRNHGVD) are Extracellular-facing. Residues 283-307 (LRLVTIPAFFSKSACVYNPIIYCFM) traverse the membrane as a helical segment. N6-(retinylidene)lysine is present on lysine 294. The Cytoplasmic portion of the chain corresponds to 308–349 (NKQFRACIMEMVCGKPMTDESELSSSQKTEVSTVSSSQVGPN). Positions 327-349 (ESELSSSQKTEVSTVSSSQVGPN) are disordered. Polar residues predominate over residues 330–349 (LSSSQKTEVSTVSSSQVGPN).

It belongs to the G-protein coupled receptor 1 family. Opsin subfamily. Phosphorylated on some or all of the serine and threonine residues present in the C-terminal region.

It is found in the cell membrane. Its subcellular location is the photoreceptor inner segment. The protein resides in the cell projection. The protein localises to the cilium. It localises to the photoreceptor outer segment. It is found in the cytoplasm. Its subcellular location is the perinuclear region. Functionally, visual pigments are the light-absorbing molecules that mediate vision. They consist of an apoprotein, opsin, covalently linked to cis-retinal. Required for the maintenance of cone outer segment organization in the ventral retina, but not essential for the maintenance of functioning cone photoreceptors. Involved in ensuring correct abundance and localization of retinal membrane proteins. May increase spectral sensitivity in dim light. This chain is Short-wave-sensitive opsin 1 (OPN1SW), found in Bos taurus (Bovine).